The sequence spans 362 residues: Histidinol-phosphate aminotransferase (362 aa).

Position 218 is an N6-(pyridoxal phosphate)lysine (K218).

This sequence belongs to the class-II pyridoxal-phosphate-dependent aminotransferase family. Histidinol-phosphate aminotransferase subfamily. As to quaternary structure, homodimer. Requires pyridoxal 5'-phosphate as cofactor.

It catalyses the reaction L-histidinol phosphate + 2-oxoglutarate = 3-(imidazol-4-yl)-2-oxopropyl phosphate + L-glutamate. It functions in the pathway amino-acid biosynthesis; L-histidine biosynthesis; L-histidine from 5-phospho-alpha-D-ribose 1-diphosphate: step 7/9. The chain is Histidinol-phosphate aminotransferase from Ruegeria sp. (strain TM1040) (Silicibacter sp.).